A 563-amino-acid polypeptide reads, in one-letter code: NAD(P)H-quinone oxidoreductase chain 4 (563 aa).

The next 15 helical transmembrane spans lie at 25–45, 56–76, 90–110, 111–131, 133–153, 157–177, 189–209, 230–250, 264–284, 298–318, 335–355, 356–376, 397–417, 438–458, and 485–505; these read FPWL…VPFI, WFAL…YLYG, VSWL…ISMP, LILL…PVTF, PKLF…VFAV, LLFF…LAIW, FIIY…AMGF, GFQL…LPIV, TAPV…YALM, FAPL…LTSF, MGFV…GAML, QMIS…ATYD, FALW…SGFV, IVIA…LLSM, and VYII…PRLM.

It belongs to the complex I subunit 4 family.

The protein resides in the cellular thylakoid membrane. It catalyses the reaction a plastoquinone + NADH + (n+1) H(+)(in) = a plastoquinol + NAD(+) + n H(+)(out). The catalysed reaction is a plastoquinone + NADPH + (n+1) H(+)(in) = a plastoquinol + NADP(+) + n H(+)(out). Functionally, NDH-1 shuttles electrons from NAD(P)H, via FMN and iron-sulfur (Fe-S) centers, to quinones in the respiratory chain. The immediate electron acceptor for the enzyme in this species is believed to be plastoquinone. Couples the redox reaction to proton translocation (for every two electrons transferred, four hydrogen ions are translocated across the cytoplasmic membrane), and thus conserves the redox energy in a proton gradient. The protein is NAD(P)H-quinone oxidoreductase chain 4 of Prochlorococcus marinus (strain MIT 9313).